The sequence spans 176 residues: RNA 2',3'-cyclic phosphodiesterase (176 aa).

Catalysis depends on His43, which acts as the Proton donor. Short sequence motifs (HXTX) lie at residues 43–46 (HLTL) and 125–128 (HITL). Catalysis depends on His125, which acts as the Proton acceptor.

Belongs to the 2H phosphoesterase superfamily. ThpR family. In terms of assembly, monomer.

The catalysed reaction is a 3'-end 2',3'-cyclophospho-ribonucleotide-RNA + H2O = a 3'-end 2'-phospho-ribonucleotide-RNA + H(+). Functionally, hydrolyzes RNA 2',3'-cyclic phosphodiester to an RNA 2'-phosphomonoester. In vitro, can also ligate 5' and 3' half-tRNA molecules with 2',3'-cyclic phosphate and 5'-hydroxyl termini, respectively, to the product containing the 2'-5' phosphodiester linkage. This reaction does not require ATP and is reversible. This Escherichia coli (strain K12) protein is RNA 2',3'-cyclic phosphodiesterase.